The following is a 270-amino-acid chain: NAD(P)H-hydrate epimerase (270 aa).

The region spanning 25 to 234 (FQQLMDLMQN…DLLAPEEIYQ (210 aa)) is the YjeF N-terminal domain. 73–77 (DNGGQ) is a (6S)-NADPHX binding site. Residues Asn-74 and Asp-144 each contribute to the K(+) site. Residues 148–154 (GVGLYGH) and Glu-177 contribute to the (6S)-NADPHX site. K(+) is bound at residue Thr-180.

This sequence belongs to the NnrE/AIBP family. K(+) serves as cofactor.

It catalyses the reaction (6R)-NADHX = (6S)-NADHX. It carries out the reaction (6R)-NADPHX = (6S)-NADPHX. In terms of biological role, catalyzes the epimerization of the S- and R-forms of NAD(P)HX, a damaged form of NAD(P)H that is a result of enzymatic or heat-dependent hydration. This is a prerequisite for the S-specific NAD(P)H-hydrate dehydratase to allow the repair of both epimers of NAD(P)HX. This is NAD(P)H-hydrate epimerase from Legionella pneumophila (strain Paris).